Reading from the N-terminus, the 289-residue chain is Glucosamine-6-phosphate deaminase 1 (289 aa).

Lys64 carries the post-translational modification N6-acetyllysine. Asp72 acts as the Proton acceptor; for enolization step in catalysis. Asp141 serves as the catalytic For ring-opening step. Residue His143 is the Proton acceptor; for ring-opening step of the active site. Glu148 acts as the For ring-opening step in catalysis. At Thr161 the chain carries Phosphothreonine.

The protein belongs to the glucosamine/galactosamine-6-phosphate isomerase family. As to quaternary structure, homohexamer.

It is found in the cytoplasm. The enzyme catalyses alpha-D-glucosamine 6-phosphate + H2O = beta-D-fructose 6-phosphate + NH4(+). It functions in the pathway nucleotide-sugar biosynthesis; UDP-N-acetyl-alpha-D-glucosamine biosynthesis; alpha-D-glucosamine 6-phosphate from D-fructose 6-phosphate: step 1/1. Its activity is regulated as follows. Allosterically activated by N-acetylglucosamine-6-phosphate (GlcNAc6P). Functionally, catalyzes the reversible conversion of alpha-D-glucosamine 6-phosphate (GlcN-6P) into beta-D-fructose 6-phosphate (Fru-6P) and ammonium ion, a regulatory reaction step in de novo uridine diphosphate-N-acetyl-alpha-D-glucosamine (UDP-GlcNAc) biosynthesis via hexosamine pathway. Deamination is coupled to aldo-keto isomerization mediating the metabolic flux from UDP-GlcNAc toward Fru-6P. At high ammonium level can drive amination and isomerization of Fru-6P toward hexosamines and UDP-GlcNAc synthesis. Has a role in fine tuning the metabolic fluctuations of cytosolic UDP-GlcNAc and their effects on hyaluronan synthesis that occur during tissue remodeling. Seems to trigger calcium oscillations in mammalian eggs. These oscillations serve as the essential trigger for egg activation and early development of the embryo. The protein is Glucosamine-6-phosphate deaminase 1 of Bos taurus (Bovine).